Reading from the N-terminus, the 100-residue chain is NADH-quinone oxidoreductase subunit K (100 aa).

3 helical membrane-spanning segments follow: residues 4–24 (TTWVIILSFLLFAIGTFGLLS), 28–48 (LLFILLSLEIMLNGIILLFIA), and 60–80 (IMYLLVLTLAASEVAVGLALV).

It belongs to the complex I subunit 4L family. NDH-1 is composed of 13 different subunits. Subunits NuoA, H, J, K, L, M, N constitute the membrane sector of the complex.

It localises to the cell inner membrane. The catalysed reaction is a quinone + NADH + 5 H(+)(in) = a quinol + NAD(+) + 4 H(+)(out). Its function is as follows. NDH-1 shuttles electrons from NADH, via FMN and iron-sulfur (Fe-S) centers, to quinones in the respiratory chain. The immediate electron acceptor for the enzyme in this species is believed to be ubiquinone. Couples the redox reaction to proton translocation (for every two electrons transferred, four hydrogen ions are translocated across the cytoplasmic membrane), and thus conserves the redox energy in a proton gradient. The sequence is that of NADH-quinone oxidoreductase subunit K from Shewanella woodyi (strain ATCC 51908 / MS32).